The chain runs to 283 residues: Probable protein phosphatase 2C 17 (283 aa).

The PPM-type phosphatase domain occupies 32–282; the sequence is KYGFSLIKGK…DDISCIVVRF (251 aa). The Mn(2+) site is built by D69, G70, D234, and D273.

The protein belongs to the PP2C family. It depends on Mg(2+) as a cofactor. Requires Mn(2+) as cofactor.

It catalyses the reaction O-phospho-L-seryl-[protein] + H2O = L-seryl-[protein] + phosphate. The catalysed reaction is O-phospho-L-threonyl-[protein] + H2O = L-threonyl-[protein] + phosphate. This chain is Probable protein phosphatase 2C 17, found in Arabidopsis thaliana (Mouse-ear cress).